The primary structure comprises 760 residues: Probable 3',5'-cyclic phosphodiesterase pde-6 (760 aa).

Disordered stretches follow at residues 1–47 (MGDR…AATA) and 410–429 (KRSV…ERRR). Over residues 33–47 (PAARRGAQRAPAATA) the composition is skewed to low complexity. Residues 412–429 (SVVDAHREKRGSHGERRR) show a composition bias toward basic and acidic residues. The 325-residue stretch at 426–750 (ERRRVSADVK…EKWKVMTSQW (325 aa)) folds into the PDEase domain. H502 serves as the catalytic Proton donor. Positions 506, 542, 543, and 656 each coordinate a divalent metal cation.

Belongs to the cyclic nucleotide phosphodiesterase family. A divalent metal cation serves as cofactor.

It catalyses the reaction a nucleoside 3',5'-cyclic phosphate + H2O = a nucleoside 5'-phosphate + H(+). The chain is Probable 3',5'-cyclic phosphodiesterase pde-6 (pde-6) from Caenorhabditis elegans.